The following is a 943-amino-acid chain: Sodium- and chloride-dependent GABA transporter ine (943 aa).

The Cytoplasmic portion of the chain corresponds to 1-345 (MAENKDVSQV…RQQHWANKMQ (345 aa)). Residues 103–122 (HKQSPLRHTSVRTRPSSEVL) are disordered. 3 consecutive transmembrane segments (helical) span residues 346 to 366 (FVLA…FPYM), 373 to 393 (GVFL…LLFM), and 418 to 438 (GAGL…SVII). Residues 439–510 (GYSIYYFFTS…GLEYPGMMRW (72 aa)) are Extracellular-facing. The N-linked (GlcNAc...) asparagine glycan is linked to Asn-476. The next 9 helical transmembrane spans lie at 511–531 (ELFA…WKSI), 539–559 (YFTA…AVTL), 591–607 (FNSL…FASY), 618–638 (TVAV…FAFS), 679–699 (WAVM…FAIV), 723–743 (IVVL…IIQG), 754–774 (YAAS…IAWF), 799–819 (CWLV…LINY), and 836–856 (YGIG…YAVI). Residues 857 to 943 (NFLRSSGDTF…HAEAGGPCGQ (87 aa)) are Cytoplasmic-facing.

The protein belongs to the sodium:neurotransmitter symporter (SNF) (TC 2.A.22) family. Expressed both maternally and zygotically. Developing embryos exhibit expression in the posterior hindgut, foregut, midgut, Malpighian tubules, anal plate, Garland cells, and a subset of cells in the central nervous system. Central nervous system expression is seen in segmentally repeating in cells flanking the midline of the ventral ganglion. Isoform A and isoform B are colocalized in both the nervous system and the fluid reabsorption system.

It is found in the membrane. Plays a role in neuronal membrane excitation, important for normal response properties of the photoreceptor. Able to control excitability from either neurons or glia cells. Ine negatively regulates neuronal sodium channels. Controls neurotransmitter-mediated signaling pathways associated with the structure of the larval peripheral nerve, ine and eag control perineurial glial growth through partially redundant pathways. Isoform A and isoform B are both functional, although isoform A functions with greater efficiency. Has a role in osmolyte transport within the Malpighian tubule and hindgut. This Drosophila melanogaster (Fruit fly) protein is Sodium- and chloride-dependent GABA transporter ine.